The primary structure comprises 129 residues: M-zodatoxin-Lt8i (129 aa).

An N-terminal signal peptide occupies residues 1-20 (MKYFVVALALVAAFACIAES). Residues 21 to 60 (KPAESEHELAEVEEENELADLEDAVWLEHLADLSDLEEAR) constitute a propeptide that is removed on maturation.

Belongs to the cationic peptide 06 (cytoinsectotoxin) family. In terms of tissue distribution, expressed by the venom gland.

Its subcellular location is the secreted. Its function is as follows. Insecticidal, cytolytic and antimicrobial peptide. Forms voltage-dependent, ion-permeable channels in membranes. At high concentration causes cell membrane lysis. The chain is M-zodatoxin-Lt8i (cit 1-6) from Lachesana tarabaevi (Spider).